The sequence spans 422 residues: Enolase (422 aa).

Q162 contacts (2R)-2-phosphoglycerate. Catalysis depends on E204, which acts as the Proton donor. The Mg(2+) site is built by D241, E284, and D311. The (2R)-2-phosphoglycerate site is built by K336, R365, S366, and K387. The active-site Proton acceptor is K336.

The protein belongs to the enolase family. In terms of assembly, component of the RNA degradosome, a multiprotein complex involved in RNA processing and mRNA degradation. It depends on Mg(2+) as a cofactor.

It localises to the cytoplasm. Its subcellular location is the secreted. The protein localises to the cell surface. It catalyses the reaction (2R)-2-phosphoglycerate = phosphoenolpyruvate + H2O. It participates in carbohydrate degradation; glycolysis; pyruvate from D-glyceraldehyde 3-phosphate: step 4/5. Catalyzes the reversible conversion of 2-phosphoglycerate (2-PG) into phosphoenolpyruvate (PEP). It is essential for the degradation of carbohydrates via glycolysis. This chain is Enolase, found in Legionella pneumophila (strain Lens).